A 207-amino-acid chain; its full sequence is DNA-directed RNA polymerase subunit alpha (207 aa).

Belongs to the RNA polymerase alpha chain family. In plastids the minimal PEP RNA polymerase catalytic core is composed of four subunits: alpha, beta, beta', and beta''. When a (nuclear-encoded) sigma factor is associated with the core the holoenzyme is formed, which can initiate transcription.

It localises to the plastid. It is found in the chloroplast. The catalysed reaction is RNA(n) + a ribonucleoside 5'-triphosphate = RNA(n+1) + diphosphate. In terms of biological role, DNA-dependent RNA polymerase catalyzes the transcription of DNA into RNA using the four ribonucleoside triphosphates as substrates. The polypeptide is DNA-directed RNA polymerase subunit alpha (rpoA) (Euglena anabaena (Euglenaria anabaena)).